We begin with the raw amino-acid sequence, 311 residues long: Inositol oxygenase 1 (311 aa).

Over residues 1–11 the composition is skewed to basic and acidic residues; that stretch reads MTILIDRHSDQ. The disordered stretch occupies residues 1–29; it reads MTILIDRHSDQNDAGDEIVEKNQGNGKEE. Substrate contacts are provided by residues Arg-52 and 109 to 111; that span reads DES. Residues His-122, His-147, and Asp-148 each contribute to the Fe cation site. Residues Lys-151 and 168–169 each bind substrate; that span reads GD. His-220, His-246, and Asp-279 together coordinate Fe cation. Residue 246-247 coordinates substrate; sequence HS.

The protein belongs to the myo-inositol oxygenase family. Fe cation serves as cofactor. As to expression, expressed in roots, young leaves, stems, flowers and siliques.

It localises to the cytoplasm. It catalyses the reaction myo-inositol + O2 = D-glucuronate + H2O + H(+). It functions in the pathway polyol metabolism; myo-inositol degradation into D-glucuronate; D-glucuronate from myo-inositol: step 1/1. Catalyzes the oxygenative cleavage of myo-inositol to D-glucuronate. Involved in the biosynthesis of UDP-glucuronic acid (UDP-GlcA), providing nucleotide sugars for cell-wall polymers. May be also involved in plant ascorbate biosynthesis. The chain is Inositol oxygenase 1 (MIOX1) from Arabidopsis thaliana (Mouse-ear cress).